A 169-amino-acid chain; its full sequence is Putative glycine cleavage system H protein, mitochondrial (169 aa).

Residues 60-142 (VGTVGITSYA…EEEGWICKIK (83 aa)) enclose the Lipoyl-binding domain. Position 101 is an N6-lipoyllysine (lysine 101). At serine 131 the chain carries Phosphoserine.

It belongs to the GcvH family. Component of the glycine decarboxylase complex (GDC), which is composed of four proteins: P, T, L and H. (R)-lipoate is required as a cofactor.

The protein localises to the mitochondrion. In terms of biological role, the glycine cleavage system (glycine decarboxylase complex) catalyzes the degradation of glycine. The H protein shuttles the methylamine group of glycine from the P protein to the T protein. In Schizosaccharomyces pombe (strain 972 / ATCC 24843) (Fission yeast), this protein is Putative glycine cleavage system H protein, mitochondrial (gcv3).